Consider the following 306-residue polypeptide: Ribosomal protein L11 methyltransferase (306 aa).

Residues Thr139, Gly173, Asp195, and Asn242 each contribute to the S-adenosyl-L-methionine site.

It belongs to the methyltransferase superfamily. PrmA family.

The protein resides in the cytoplasm. It catalyses the reaction L-lysyl-[protein] + 3 S-adenosyl-L-methionine = N(6),N(6),N(6)-trimethyl-L-lysyl-[protein] + 3 S-adenosyl-L-homocysteine + 3 H(+). In terms of biological role, methylates ribosomal protein L11. This is Ribosomal protein L11 methyltransferase from Trichormus variabilis (strain ATCC 29413 / PCC 7937) (Anabaena variabilis).